The sequence spans 99 residues: Large ribosomal subunit protein uL23c (99 aa).

The protein belongs to the universal ribosomal protein uL23 family. Part of the 50S ribosomal subunit.

The protein resides in the plastid. Its subcellular location is the chloroplast. Functionally, binds to 23S rRNA. This Emiliania huxleyi (Coccolithophore) protein is Large ribosomal subunit protein uL23c (rpl23).